Here is a 434-residue protein sequence, read N- to C-terminus: Beta-enolase (434 aa).

At alanine 2 the chain carries N-acetylalanine. Threonine 72 carries the phosphothreonine modification. Serine 83 and serine 157 each carry phosphoserine. Substrate-binding residues include histidine 158 and glutamate 167. A Phosphoserine modification is found at serine 176. Phosphothreonine is present on threonine 205. Residue glutamate 210 is the Proton donor of the active site. Threonine 229 carries the post-translational modification Phosphothreonine. The residue at position 236 (tyrosine 236) is a Phosphotyrosine. Aspartate 245 contacts Mg(2+). Position 263 is a phosphoserine (serine 263). Positions 293 and 318 each coordinate substrate. The Mg(2+) site is built by glutamate 293 and aspartate 318. The active-site Proton acceptor is the lysine 343. Substrate contacts are provided by residues 370-373 and lysine 394; that span reads SHRS.

Belongs to the enolase family. In terms of assembly, mammalian enolase is composed of 3 isozyme subunits, alpha, beta and gamma, which can form homodimers or heterodimers which are cell-type and development-specific. Interacts with PNKD. Mg(2+) is required as a cofactor.

The protein localises to the cytoplasm. The enzyme catalyses (2R)-2-phosphoglycerate = phosphoenolpyruvate + H2O. It functions in the pathway carbohydrate degradation; glycolysis; pyruvate from D-glyceraldehyde 3-phosphate: step 4/5. Its function is as follows. Glycolytic enzyme that catalyzes the conversion of 2-phosphoglycerate to phosphoenolpyruvate. Appears to have a function in striated muscle development and regeneration. This is Beta-enolase (ENO3) from Sus scrofa (Pig).